The primary structure comprises 290 residues: Isopentenyl-diphosphate Delta-isomerase II (290 aa).

A Nudix hydrolase domain is found at 108–260 (MLHRAFTVFL…GLKLSPWFRL (153 aa)). Catalysis depends on residues Cys-145 and Glu-207.

This sequence belongs to the IPP isomerase type 1 family.

The catalysed reaction is isopentenyl diphosphate = dimethylallyl diphosphate. It functions in the pathway isoprenoid biosynthesis; dimethylallyl diphosphate biosynthesis; dimethylallyl diphosphate from isopentenyl diphosphate: step 1/1. It participates in porphyrin-containing compound metabolism; chlorophyll biosynthesis. Functionally, catalyzes the 1,3-allylic rearrangement of the homoallylic substrate isopentenyl (IPP) to its highly electrophilic allylic isomer, dimethylallyl diphosphate (DMAPP). This chain is Isopentenyl-diphosphate Delta-isomerase II (IPI2), found in Clarkia xantiana (Gunsight clarkia).